Here is a 228-residue protein sequence, read N- to C-terminus: ATP synthase subunit beta, mitochondrial (228 aa).

The N-terminal 31 residues, 1 to 31 (MFALRAAAKADKNLLPFLGQLSRSHAAKAAK), are a transit peptide targeting the mitochondrion. Residue 183–190 (GGAGVGKT) participates in ATP binding.

The protein belongs to the ATPase alpha/beta chains family. As to quaternary structure, F-type ATPases have 2 components, CF(1) - the catalytic core - and CF(0) - the membrane proton channel. CF(1) has five subunits: alpha(3), beta(3), gamma(1), delta(1), epsilon(1). CF(0) has three main subunits: a, b and c.

The protein localises to the mitochondrion. The protein resides in the mitochondrion inner membrane. The enzyme catalyses ATP + H2O + 4 H(+)(in) = ADP + phosphate + 5 H(+)(out). In terms of biological role, mitochondrial membrane ATP synthase (F(1)F(0) ATP synthase or Complex V) produces ATP from ADP in the presence of a proton gradient across the membrane which is generated by electron transport complexes of the respiratory chain. F-type ATPases consist of two structural domains, F(1) - containing the extramembraneous catalytic core, and F(0) - containing the membrane proton channel, linked together by a central stalk and a peripheral stalk. During catalysis, ATP synthesis in the catalytic domain of F(1) is coupled via a rotary mechanism of the central stalk subunits to proton translocation. Subunits alpha and beta form the catalytic core in F(1). Rotation of the central stalk against the surrounding alpha(3)beta(3) subunits leads to hydrolysis of ATP in three separate catalytic sites on the beta subunits. The protein is ATP synthase subunit beta, mitochondrial of Drosophila virilis (Fruit fly).